Reading from the N-terminus, the 270-residue chain is Urease accessory protein UreD (270 aa).

This sequence belongs to the UreD family. In terms of assembly, ureD, UreF and UreG form a complex that acts as a GTP-hydrolysis-dependent molecular chaperone, activating the urease apoprotein by helping to assemble the nickel containing metallocenter of UreC. The UreE protein probably delivers the nickel.

Its subcellular location is the cytoplasm. In terms of biological role, required for maturation of urease via the functional incorporation of the urease nickel metallocenter. The sequence is that of Urease accessory protein UreD from Actinobacillus pleuropneumoniae serotype 3 (strain JL03).